A 194-amino-acid chain; its full sequence is ATP-dependent Clp protease proteolytic subunit (194 aa).

The Nucleophile role is filled by S97. The active site involves H122.

It belongs to the peptidase S14 family. In terms of assembly, fourteen ClpP subunits assemble into 2 heptameric rings which stack back to back to give a disk-like structure with a central cavity, resembling the structure of eukaryotic proteasomes.

It localises to the cytoplasm. The enzyme catalyses Hydrolysis of proteins to small peptides in the presence of ATP and magnesium. alpha-casein is the usual test substrate. In the absence of ATP, only oligopeptides shorter than five residues are hydrolyzed (such as succinyl-Leu-Tyr-|-NHMec, and Leu-Tyr-Leu-|-Tyr-Trp, in which cleavage of the -Tyr-|-Leu- and -Tyr-|-Trp bonds also occurs).. Functionally, cleaves peptides in various proteins in a process that requires ATP hydrolysis. Has a chymotrypsin-like activity. Plays a major role in the degradation of misfolded proteins. The protein is ATP-dependent Clp protease proteolytic subunit of Lactobacillus helveticus (strain DPC 4571).